Consider the following 156-residue polypeptide: Crossover junction endodeoxyribonuclease RuvC (156 aa).

Active-site residues include Asp-9, Glu-69, and Asp-141. Residues Asp-9, Glu-69, and Asp-141 each contribute to the Mg(2+) site.

The protein belongs to the RuvC family. In terms of assembly, homodimer which binds Holliday junction (HJ) DNA. The HJ becomes 2-fold symmetrical on binding to RuvC with unstacked arms; it has a different conformation from HJ DNA in complex with RuvA. In the full resolvosome a probable DNA-RuvA(4)-RuvB(12)-RuvC(2) complex forms which resolves the HJ. It depends on Mg(2+) as a cofactor.

Its subcellular location is the cytoplasm. It catalyses the reaction Endonucleolytic cleavage at a junction such as a reciprocal single-stranded crossover between two homologous DNA duplexes (Holliday junction).. Functionally, the RuvA-RuvB-RuvC complex processes Holliday junction (HJ) DNA during genetic recombination and DNA repair. Endonuclease that resolves HJ intermediates. Cleaves cruciform DNA by making single-stranded nicks across the HJ at symmetrical positions within the homologous arms, yielding a 5'-phosphate and a 3'-hydroxyl group; requires a central core of homology in the junction. The consensus cleavage sequence is 5'-(A/T)TT(C/G)-3'. Cleavage occurs on the 3'-side of the TT dinucleotide at the point of strand exchange. HJ branch migration catalyzed by RuvA-RuvB allows RuvC to scan DNA until it finds its consensus sequence, where it cleaves and resolves the cruciform DNA. This chain is Crossover junction endodeoxyribonuclease RuvC, found in Acaryochloris marina (strain MBIC 11017).